The primary structure comprises 256 residues: UPF0246 protein Maqu_2499 (256 aa).

The protein belongs to the UPF0246 family.

The polypeptide is UPF0246 protein Maqu_2499 (Marinobacter nauticus (strain ATCC 700491 / DSM 11845 / VT8) (Marinobacter aquaeolei)).